The primary structure comprises 100 residues: MTKVTREEVEHIAHLARLQISEEETEEMANTLESILDFAKQNDTADTEGIEPTYHVLDLQNVLRDDEAIEGIPQELALKNAKETENGQFKVPAIMNEEEA.

Belongs to the GatC family. Heterotrimer of A, B and C subunits.

The catalysed reaction is L-glutamyl-tRNA(Gln) + L-glutamine + ATP + H2O = L-glutaminyl-tRNA(Gln) + L-glutamate + ADP + phosphate + H(+). It catalyses the reaction L-aspartyl-tRNA(Asn) + L-glutamine + ATP + H2O = L-asparaginyl-tRNA(Asn) + L-glutamate + ADP + phosphate + 2 H(+). In terms of biological role, allows the formation of correctly charged Asn-tRNA(Asn) or Gln-tRNA(Gln) through the transamidation of misacylated Asp-tRNA(Asn) or Glu-tRNA(Gln) in organisms which lack either or both of asparaginyl-tRNA or glutaminyl-tRNA synthetases. The reaction takes place in the presence of glutamine and ATP through an activated phospho-Asp-tRNA(Asn) or phospho-Glu-tRNA(Gln). The sequence is that of Aspartyl/glutamyl-tRNA(Asn/Gln) amidotransferase subunit C from Staphylococcus haemolyticus (strain JCSC1435).